Here is a 557-residue protein sequence, read N- to C-terminus: MSENSTFSTEDSSSSSYKPHASNLRRAGKKCSWASYMTNSPTLIVMIGLPARGKTYVSKKLTRYLNWIGVPTKVFNLGVYRREAVKSYKSYDFFRHDNEEAMKIRKQCALVALEDVKAYFTEESGQIAVFDATNTTRERRDMILNFAKQNAFKVFFVESVCDDPDVIAANILEVKVSSPDYPERNRENVMEDFLKRIECYKVTYQPLDPDNYDKDLSFIKVMNVGQRFLVNRVQDYIQSKIVYYLMNIHVHPRTIYLCRHGESEFNLLGKIGGDSGLSLRGKQFAQALKKFLEEQEIQDLKVWTSQLKRTIQTAESLGVTYEQWKILNEIDAGVCEEMTYSEIEQRYPEEFALRDQEKYLYRYPGGESYQDLVQRLEPVIMELERQGNVLVISHQAVMRCLLAYFLDKGADELPYLRCPLHIIFKLTPVAYGCKVETITLNVEAVDTHRDKPTHNFPKSQTPVRMRRNSFTPLSSSNTIRRPRNYSVGSRPLKPLSPLRALDMQEGADQPKTQVQQGSAQATEHLQKALEFANGHREVENVLAKHRRPSMASLTLLS.

Residues 1 to 16 (MSENSTFSTEDSSSSS) are compositionally biased toward low complexity. The segment at 1–21 (MSENSTFSTEDSSSSSYKPHA) is disordered. S2 is subject to N-acetylserine. The segment at 2-251 (SENSTFSTED…VYYLMNIHVH (250 aa)) is 6-phosphofructo-2-kinase. S32 carries the post-translational modification Phosphoserine; by PKA. An ATP-binding site is contributed by 48–56 (GLPARGKTY). Positions 81 and 105 each coordinate beta-D-fructose 6-phosphate. The active site involves D131. Beta-D-fructose 6-phosphate contacts are provided by T133 and R139. C161 is an active-site residue. ATP is bound at residue 170–175 (NILEVK). Residues K175, R196, and Y200 each contribute to the beta-D-fructose 6-phosphate site. A fructose-2,6-bisphosphatase region spans residues 252 to 557 (PRTIYLCRHG…PSMASLTLLS (306 aa)). R259 serves as a coordination point for beta-D-fructose 2,6-bisphosphate. Catalysis depends on H260, which acts as the Tele-phosphohistidine intermediate. Residues N266 and G272 each contribute to the beta-D-fructose 2,6-bisphosphate site. E329 serves as the catalytic Proton donor/acceptor. Beta-D-fructose 2,6-bisphosphate-binding residues include Y340, R354, K358, Y369, Q395, and R399. 351–354 (FALR) is a binding site for ATP. Residues 395–399 (QAVMR) and Y431 each bind ATP. The tract at residues 449 to 495 (RDKPTHNFPKSQTPVRMRRNSFTPLSSSNTIRRPRNYSVGSRPLKPL) is disordered. Positions 456-479 (FPKSQTPVRMRRNSFTPLSSSNTI) are enriched in polar residues. The residue at position 469 (S469) is a Phosphoserine. T471 is subject to Phosphothreonine. T478 bears the Phosphothreonine; by PKC mark. A phosphoserine mark is found at S486 and S496.

In the C-terminal section; belongs to the phosphoglycerate mutase family. In terms of assembly, homodimer. Forms a heterodimer with PFKFB3. Post-translationally, phosphorylation by AMPK stimulates activity.

The enzyme catalyses beta-D-fructose 2,6-bisphosphate + H2O = beta-D-fructose 6-phosphate + phosphate. It catalyses the reaction beta-D-fructose 6-phosphate + ATP = beta-D-fructose 2,6-bisphosphate + ADP + H(+). With respect to regulation, phosphorylation results in the activation of the kinase activity. In terms of biological role, synthesis and degradation of fructose 2,6-bisphosphate. This is 6-phosphofructo-2-kinase/fructose-2,6-bisphosphatase 2 (Pfkfb2) from Rattus norvegicus (Rat).